We begin with the raw amino-acid sequence, 228 residues long: Ribulose-phosphate 3-epimerase (228 aa).

Serine 9 provides a ligand contact to substrate. A divalent metal cation is bound by residues histidine 34, aspartate 36, and histidine 70. Catalysis depends on aspartate 36, which acts as the Proton acceptor. Residues histidine 70, 146–149 (GFPG), 179–181 (DGG), and 201–202 (GS) each bind substrate. Position 179 (aspartate 179) interacts with a divalent metal cation. The active-site Proton donor is aspartate 179.

Belongs to the ribulose-phosphate 3-epimerase family. Requires a divalent metal cation as cofactor.

It catalyses the reaction D-ribulose 5-phosphate = D-xylulose 5-phosphate. The protein operates within carbohydrate degradation. Catalyzes the reversible epimerization of D-ribulose 5-phosphate to D-xylulose 5-phosphate. This is Ribulose-phosphate 3-epimerase from Buchnera aphidicola subsp. Baizongia pistaciae (strain Bp).